A 236-amino-acid chain; its full sequence is Eukaryotic translation initiation factor 3 subunit J (236 aa).

Residues 20–88 (ANNINKWEGE…AEEEKRLANL (69 aa)) are disordered. A compositionally biased stretch (acidic residues) spans 28-46 (GEDDDEDVKESWEDEEEKK). 2 stretches are compositionally biased toward basic and acidic residues: residues 47 to 58 (DEEKPTKTEVPV) and 68 to 88 (AKLE…LANL).

It belongs to the eIF-3 subunit J family. As to quaternary structure, component of the eukaryotic translation initiation factor 3 (eIF-3) complex. The eIF-3 complex interacts with pix.

It localises to the cytoplasm. Its function is as follows. Component of the eukaryotic translation initiation factor 3 (eIF-3) complex, which is involved in protein synthesis of a specialized repertoire of mRNAs and, together with other initiation factors, stimulates binding of mRNA and methionyl-tRNAi to the 40S ribosome. The eIF-3 complex specifically targets and initiates translation of a subset of mRNAs involved in cell proliferation. The polypeptide is Eukaryotic translation initiation factor 3 subunit J (Drosophila willistoni (Fruit fly)).